The chain runs to 82 residues: UPF0337 protein PP_2059 (82 aa).

This sequence belongs to the UPF0337 (CsbD) family.

The protein is UPF0337 protein PP_2059 of Pseudomonas putida (strain ATCC 47054 / DSM 6125 / CFBP 8728 / NCIMB 11950 / KT2440).